The sequence spans 444 residues: Xylose isomerase (444 aa).

Catalysis depends on residues His-101 and Asp-104. Positions 232, 268, 271, 296, 307, 309, and 339 each coordinate Mg(2+).

Belongs to the xylose isomerase family. Homotetramer. Requires Mg(2+) as cofactor.

It is found in the cytoplasm. It carries out the reaction alpha-D-xylose = alpha-D-xylulofuranose. In Thermotoga petrophila (strain ATCC BAA-488 / DSM 13995 / JCM 10881 / RKU-1), this protein is Xylose isomerase.